A 1026-amino-acid polypeptide reads, in one-letter code: Multidrug resistance protein MdtC (1026 aa).

10 consecutive transmembrane segments (helical) span residues 12 to 34, 336 to 353, 360 to 382, 431 to 450, 463 to 485, 525 to 547, 853 to 875, 895 to 917, 948 to 970, and 985 to 1007; these read VATLLLTLAIALCGVLGFRLLPV, QSLIIAVALVILVVFLFL, AIPALAVPVSLIGTFAAMYLCGF, VGFTVLSMSLSLVAVFLPLL, FAVTLSVAIMISLLISLTLTPML, HARWVLLLLLGTIALNVWLYISI, LLLILAAIITVYIVLGILYESYV, LEWFGAPFSLVALIGIMLLIGIV, LLRFRPIMMTTLAALFGALPLVL, and TIVGGLLMSQVLTLYTTPVVYLF.

It belongs to the resistance-nodulation-cell division (RND) (TC 2.A.6) family. MdtC subfamily. In terms of assembly, part of a tripartite efflux system composed of MdtA, MdtB and MdtC. MdtC forms a heteromultimer with MdtB.

The protein resides in the cell inner membrane. The sequence is that of Multidrug resistance protein MdtC from Pectobacterium atrosepticum (strain SCRI 1043 / ATCC BAA-672) (Erwinia carotovora subsp. atroseptica).